The following is a 60-amino-acid chain: Large ribosomal subunit protein uL30 (60 aa).

Belongs to the universal ribosomal protein uL30 family. Part of the 50S ribosomal subunit.

The polypeptide is Large ribosomal subunit protein uL30 (Aromatoleum aromaticum (strain DSM 19018 / LMG 30748 / EbN1) (Azoarcus sp. (strain EbN1))).